A 354-amino-acid polypeptide reads, in one-letter code: MSQWRGLLQEYKEFLPVTEETPLLTLGEGNTPLIPLENLSKEWGVKAYVKYEGANPTGSFKDRGMVMAVAKAKEEGSRTIICASTGNTSAAAAAYGARAGLRCIVVIPEGKIALGKLAQAVMYGAEVLEIKGNFDHALDIVRSISEKEPITLVNSVNPYRIEGQKTSAFEICDALGQAPDVLAIPVGNAGNITAYWKGFKEYHEKKGTGLPQMRGFEAEGAAAIVRNQVIEEPETIATAIRIGNPASWTYAVEAAAESNGKIDEVTDEEILAAYQLLAQKEGVFAEPASCASIAGLRKQIASGEIKKGSTVVCVLTGNGLKDPNTAMSTIDVNPAVLPNDEQAFLDHIKGGVPK.

Lysine 61 is subject to N6-(pyridoxal phosphate)lysine. Pyridoxal 5'-phosphate-binding positions include asparagine 87, 187-191, and threonine 316; that span reads GNAGN.

Belongs to the threonine synthase family. It depends on pyridoxal 5'-phosphate as a cofactor.

The catalysed reaction is O-phospho-L-homoserine + H2O = L-threonine + phosphate. It participates in amino-acid biosynthesis; L-threonine biosynthesis; L-threonine from L-aspartate: step 5/5. In terms of biological role, catalyzes the gamma-elimination of phosphate from L-phosphohomoserine and the beta-addition of water to produce L-threonine. In Halalkalibacterium halodurans (strain ATCC BAA-125 / DSM 18197 / FERM 7344 / JCM 9153 / C-125) (Bacillus halodurans), this protein is Threonine synthase (thrC).